We begin with the raw amino-acid sequence, 254 residues long: Demethylmenaquinone methyltransferase (254 aa).

S-adenosyl-L-methionine-binding positions include T62, D80, 122–123 (DG), and S139.

It belongs to the class I-like SAM-binding methyltransferase superfamily. MenG/UbiE family.

It catalyses the reaction a 2-demethylmenaquinol + S-adenosyl-L-methionine = a menaquinol + S-adenosyl-L-homocysteine + H(+). It functions in the pathway quinol/quinone metabolism; menaquinone biosynthesis; menaquinol from 1,4-dihydroxy-2-naphthoate: step 2/2. Methyltransferase required for the conversion of demethylmenaquinol (DMKH2) to menaquinol (MKH2). The sequence is that of Demethylmenaquinone methyltransferase from Parafrankia sp. (strain EAN1pec).